The following is a 356-amino-acid chain: Probable arabinogalactan endo-beta-1,4-galactanase A (356 aa).

Residues Met1 to Ala21 form the signal peptide. A glycan (N-linked (GlcNAc...) asparagine) is linked at Asn133. Glu157 functions as the Proton donor in the catalytic mechanism. Glu268 serves as the catalytic Nucleophile.

The protein belongs to the glycosyl hydrolase 53 family.

The protein resides in the secreted. It carries out the reaction The enzyme specifically hydrolyzes (1-&gt;4)-beta-D-galactosidic linkages in type I arabinogalactans.. In terms of biological role, endogalactanase involved in the degradation of plant cell wall polysaccharides, and more particularly of hairy regions of pectin. This Aspergillus fumigatus (strain CBS 144.89 / FGSC A1163 / CEA10) (Neosartorya fumigata) protein is Probable arabinogalactan endo-beta-1,4-galactanase A (galA).